Consider the following 474-residue polypeptide: 6-phospho-beta-galactosidase (474 aa).

5 residues coordinate D-galactose 6-phosphate: Q18, H115, N159, E160, and N296. E160 (proton donor) is an active-site residue. E374 functions as the Nucleophile in the catalytic mechanism. Positions 427, 428, 434, and 436 each coordinate D-galactose 6-phosphate.

It belongs to the glycosyl hydrolase 1 family.

It carries out the reaction a 6-phospho-beta-D-galactoside + H2O = D-galactose 6-phosphate + an alcohol. Its pathway is carbohydrate metabolism; lactose degradation; D-galactose 6-phosphate and beta-D-glucose from lactose 6-phosphate: step 1/1. This Clostridium acetobutylicum (strain ATCC 824 / DSM 792 / JCM 1419 / IAM 19013 / LMG 5710 / NBRC 13948 / NRRL B-527 / VKM B-1787 / 2291 / W) protein is 6-phospho-beta-galactosidase.